A 424-amino-acid polypeptide reads, in one-letter code: Homeobox even-skipped homolog protein 2 (424 aa).

Disordered stretches follow at residues 18 to 65 and 132 to 178; these read PAGK…DTPT and TTQL…GPDQ. Composition is skewed to polar residues over residues 50–65 and 132–145; these read RPTS…DTPT and TTQL…VYSD. Residues 146-175 show a composition bias toward low complexity; it reads NGSSTNTSSNGSNITNLNGNSSSIGNSGSG. The homeobox DNA-binding region spans 179–238; sequence VRRYRTAFTREQIGRLEKEFYRENYVSRPRRCELAAALNLPETTIKVWFQNRRMKDKRQR.

It belongs to the even-skipped homeobox family.

It is found in the nucleus. This Heterodontus francisci (Horn shark) protein is Homeobox even-skipped homolog protein 2 (EVX2).